The following is a 286-amino-acid chain: Putative thiosulfate sulfurtransferase (286 aa).

The region spanning 27-134 (DDPAYRLVEV…WVDNDYPTTD (108 aa)) is the Rhodanese 1 domain. Residues K162 and K166 each participate in a glycyl lysine isopeptide (Lys-Gly) (interchain with G-Cter in SAMP2) cross-link. The Rhodanese 2 domain maps to 164-283 (VDKGLPLVDV…WGNLVGAPVE (120 aa)). C242 serves as the catalytic Cysteine persulfide intermediate. Residue R247 participates in substrate binding.

The catalysed reaction is thiosulfate + hydrogen cyanide = thiocyanate + sulfite + 2 H(+). In terms of biological role, may be a sulfotransferase involved in the formation of thiosulfate. The sequence is that of Putative thiosulfate sulfurtransferase (tssA) from Haloferax volcanii (strain ATCC 29605 / DSM 3757 / JCM 8879 / NBRC 14742 / NCIMB 2012 / VKM B-1768 / DS2) (Halobacterium volcanii).